The chain runs to 215 residues: UPF0502 protein YceH (215 aa).

Lys80 is subject to N6-acetyllysine.

Belongs to the UPF0502 family.

The polypeptide is UPF0502 protein YceH (Escherichia coli O45:K1 (strain S88 / ExPEC)).